A 376-amino-acid chain; its full sequence is Non-structural protein NS2 (376 aa).

A compositionally biased stretch (basic and acidic residues) spans 163–188 (EEREKGAVEQPHKPAFKTERGMNRPD). Residues 163–201 (EEREKGAVEQPHKPAFKTERGMNRPDSDEDQNPAGGVVN) are disordered.

Belongs to the orbivirus non-structural protein NS2 family.

Its function is as follows. Single-stranded RNA-binding protein. In Antilocapra americana (Pronghorn), this protein is Non-structural protein NS2 (Segment-8).